A 230-amino-acid polypeptide reads, in one-letter code: GDT1-like protein 4 (230 aa).

The next 6 membrane-spanning stretches (helical) occupy residues 12–32 (LAMT…AILA), 39–59 (LVLA…ATLG), 71–91 (THHI…WDGF), 135–155 (AFLT…NFFG), 175–195 (FGVV…AVIG), and 207–227 (IVAL…YLTS).

This sequence belongs to the GDT1 family.

The protein localises to the membrane. This is GDT1-like protein 4 from Arabidopsis thaliana (Mouse-ear cress).